The chain runs to 57 residues: Small ribosomal subunit protein bS21 (57 aa).

Residues 34 to 57 (RKEHYIKPSVQKKNRQKNMRSKKR) form a disordered region. A compositionally biased stretch (basic residues) spans 43 to 57 (VQKKNRQKNMRSKKR).

This sequence belongs to the bacterial ribosomal protein bS21 family.

The sequence is that of Small ribosomal subunit protein bS21 from Aster yellows witches'-broom phytoplasma (strain AYWB).